The sequence spans 22 residues: Peptide PGLa-B1 (22 aa).

Leu-22 is subject to Leucine amide.

Expressed by the skin glands.

Its subcellular location is the secreted. Its function is as follows. Has antibacterial and antifungal activity. The sequence is that of Peptide PGLa-B1 from Xenopus borealis (Kenyan clawed frog).